Reading from the N-terminus, the 612-residue chain is Membrane protein insertase YidC (612 aa).

The next 7 membrane-spanning stretches (helical) occupy residues 4–24 (NTIIGFILIFWVLFGFAYLNH), 329–349 (LVPLGWSLFRAINKCLIIPIF), 358–378 (VNLGLAILILTLIIKIALFPL), 434–454 (ILLQMPFLIALFMFFPSAIGL), 484–504 (FLGNHISLFCLLMSLATILNT), 524–544 (LTMYFMPVVMFFFLNSYPAGL), and 546–566 (YYYLISTLITIMQTIIFRGLV).

Belongs to the OXA1/ALB3/YidC family. Type 1 subfamily. In terms of assembly, interacts with the Sec translocase complex via SecD. Specifically interacts with transmembrane segments of nascent integral membrane proteins during membrane integration.

It is found in the cell inner membrane. Its function is as follows. Required for the insertion and/or proper folding and/or complex formation of integral membrane proteins into the membrane. Involved in integration of membrane proteins that insert both dependently and independently of the Sec translocase complex, as well as at least some lipoproteins. Aids folding of multispanning membrane proteins. The protein is Membrane protein insertase YidC of Azobacteroides pseudotrichonymphae genomovar. CFP2.